Reading from the N-terminus, the 292-residue chain is Putative two-component response regulator-like APRR4 (292 aa).

One can recognise a Response regulatory domain in the interval 43–158 (RVLVFDEDPS…DLRIVFKHLV (116 aa)). Positions 168–215 (VTGEAEKAAGEKSSSVGDSTIRNPNKSKRSSCLEAEVNEEDRHDHNDR) are disordered. The segment covering 179 to 191 (KSSSVGDSTIRNP) has biased composition (polar residues). Residues 225–275 (RVVWDEELHQNFLNAVDFLGLERAVPKKILDVMKVDYISRENVASHLQVTF) constitute a DNA-binding region (myb-like GARP).

Belongs to the ARR-like family. Binds the target DNA as a monomer.

It localises to the nucleus. Transcriptional activator that binds specifically to the DNA sequence 5'-[AG]GATT-3'. This chain is Putative two-component response regulator-like APRR4 (APRR4), found in Arabidopsis thaliana (Mouse-ear cress).